Here is a 391-residue protein sequence, read N- to C-terminus: Formate-dependent phosphoribosylglycinamide formyltransferase (391 aa).

N(1)-(5-phospho-beta-D-ribosyl)glycinamide-binding positions include 18-19 (EL) and Glu78. Residues Arg110, Lys151, 156–161 (SSGKGQ), 191–194 (EEFI), and Glu199 each bind ATP. An ATP-grasp domain is found at 115 to 305 (DLASKDLKIK…EFELHLRAFL (191 aa)). 2 residues coordinate Mg(2+): Glu264 and Glu276. N(1)-(5-phospho-beta-D-ribosyl)glycinamide is bound by residues Asp283, Lys353, and 360-361 (RR).

Belongs to the PurK/PurT family. As to quaternary structure, homodimer.

It catalyses the reaction N(1)-(5-phospho-beta-D-ribosyl)glycinamide + formate + ATP = N(2)-formyl-N(1)-(5-phospho-beta-D-ribosyl)glycinamide + ADP + phosphate + H(+). It participates in purine metabolism; IMP biosynthesis via de novo pathway; N(2)-formyl-N(1)-(5-phospho-D-ribosyl)glycinamide from N(1)-(5-phospho-D-ribosyl)glycinamide (formate route): step 1/1. In terms of biological role, involved in the de novo purine biosynthesis. Catalyzes the transfer of formate to 5-phospho-ribosyl-glycinamide (GAR), producing 5-phospho-ribosyl-N-formylglycinamide (FGAR). Formate is provided by PurU via hydrolysis of 10-formyl-tetrahydrofolate. The polypeptide is Formate-dependent phosphoribosylglycinamide formyltransferase (Prochlorococcus marinus (strain MIT 9301)).